A 969-amino-acid polypeptide reads, in one-letter code: RNA polymerase-associated protein RapA (969 aa).

In terms of domain architecture, Helicase ATP-binding spans Glu-164–Asp-334. Asp-177 to Thr-184 lines the ATP pocket. The DEAH box signature appears at Asp-280–His-283. A Helicase C-terminal domain is found at Arg-492–Ile-668.

This sequence belongs to the SNF2/RAD54 helicase family. RapA subfamily. In terms of assembly, interacts with the RNAP. Has a higher affinity for the core RNAP than for the holoenzyme. Its ATPase activity is stimulated by binding to RNAP.

Its function is as follows. Transcription regulator that activates transcription by stimulating RNA polymerase (RNAP) recycling in case of stress conditions such as supercoiled DNA or high salt concentrations. Probably acts by releasing the RNAP, when it is trapped or immobilized on tightly supercoiled DNA. Does not activate transcription on linear DNA. Probably not involved in DNA repair. In Aliivibrio fischeri (strain MJ11) (Vibrio fischeri), this protein is RNA polymerase-associated protein RapA.